The following is a 250-amino-acid chain: Cellulose biosynthesis protein BcsQ (250 aa).

An ATP-binding site is contributed by 9 to 16; sequence VRGGVGTT.

The protein belongs to the BcsQ family.

The protein resides in the cytoplasm. Functionally, essential for cellulose biosynthesis, shown for strain 1094, a commensal, natural cellulose producer. Also shown in strain W3110 which has a restored reading frame (TAG stop codon to TTG for amino acid 6, called strain AR3110), this protein. May play a role in subcellular localization of an active cellulose biosynthesis apparatus at the bacterial cell pole. The combination of cellulose and the curli fiber network confer cohesion, elasticity and tissue-like properties to colonies. The protein is Cellulose biosynthesis protein BcsQ of Escherichia coli (strain K12).